Consider the following 118-residue polypeptide: Transcription factor PAR2 (118 aa).

Residues 1–59 (MEKTLATSHTKRSSPPSPSSAVNTSSTGFNRRTRQRLSDATASVSETDVEDEDEDEEGV) are disordered. Over residues 19–30 (SSAVNTSSTGFN) the composition is skewed to polar residues. Residues 43–92 (SVSETDVEDEDEDEEGVEEKIEALQTIVPGGTELGVDALFEETASYILAL) form the bHLH domain. A compositionally biased stretch (acidic residues) spans 47–59 (TDVEDEDEDEEGV).

Belongs to the bHLH protein family. In terms of assembly, homodimer.

The protein resides in the nucleus. Its function is as follows. Atypical bHLH transcription factor that acts as a negative regulator of a variety of shade avoidance syndrome (SAS) responses, including seedling elongation and photosynthetic pigment accumulation. Acts as a direct transcriptional repressor of two auxin-responsive genes, SAUR15 and SAUR68. May function in integrating shade and hormone transcriptional networks in response to light and auxin changes. This chain is Transcription factor PAR2 (PAR2), found in Arabidopsis thaliana (Mouse-ear cress).